Reading from the N-terminus, the 92-residue chain is uncharacterized protein (92 aa).

Residues 1–92 (MSDAAAPAQA…PSPSQQQVAA (92 aa)) are disordered.

This is an uncharacterized protein from Caenorhabditis elegans.